Reading from the N-terminus, the 585-residue chain is Frizzled-10 (585 aa).

A signal peptide spans 1 to 24 (MGPAAGNLVRAVLALCWLAEHCAG). The Extracellular segment spans residues 25–229 (ISSIDIERPG…DVYWSKDDKQ (205 aa)). The FZ domain maps to 33–154 (PGDGRCQPIE…NDPNYLCMEA (122 aa)). 5 cysteine pairs are disulfide-bonded: C38–C99, C46–C92, C83–C121, C110–C151, and C114–C138. N52 is a glycosylation site (N-linked (GlcNAc...) asparagine). The tract at residues 155–195 (PNNGSDEPPRGSSMLPPMFRPQRPSTGHDLQQHKDSLSRTS) is disordered. The N-linked (GlcNAc...) asparagine glycan is linked to N157. Residues 230–250 (FAVIWIAIWSILCFFSSAFTV) traverse the membrane as a helical segment. The Cytoplasmic segment spans residues 251–265 (LTFLIDPQRFKYPER). The helical transmembrane segment at 266-286 (PIIFLSMCYCVYSVGYIIRLF) threads the bilayer. Over 287 to 314 (SGAESIACDRDSGQLYVIQEGLESTGCT) the chain is Extracellular. The helical transmembrane segment at 315 to 335 (IVFLVLYYFGMASSLWWVILT) threads the bilayer. Topologically, residues 336–355 (LTWFLAAGKKWGHEAIEANS) are cytoplasmic. A helical transmembrane segment spans residues 356–376 (SYFHLAAWAIPAVKTIMILVM). The Extracellular portion of the chain corresponds to 377 to 397 (RRVAGDELTGLCYVGSMDVNA). A helical transmembrane segment spans residues 398–418 (LTGFVLIPLACYLIIGTSFIL). The Cytoplasmic segment spans residues 419–447 (SGFVALFHIRRVMKTGGENTDKLEKLMVR). A helical transmembrane segment spans residues 448–468 (IGVFSVLYTVPATCVIACYFY). Residues 469-506 (ERLNMDYWKIVASQQKCKMNNQTKNLDCMMNNSIPAVE) are Extracellular-facing. N489 and N499 each carry an N-linked (GlcNAc...) asparagine glycan. Residues 507–527 (IFMVKIFMLLVVGITSGMWIW) form a helical membrane-spanning segment. Residues 528–585 (TSKTLQSWQNVCSRRLKKRSRRKPASVITSSGIYKKPQHPQKTHLAKYESTLQPPTCV) are Cytoplasmic-facing. Positions 530 to 535 (KTLQSW) match the Lys-Thr-X-X-X-Trp motif, mediates interaction with the PDZ domain of Dvl family members motif. The PDZ-binding signature appears at 583–585 (TCV).

It belongs to the G-protein coupled receptor Fz/Smo family. In terms of assembly, interacts with WNT7A. As to expression, expressed in the dorsal ectoderm overlying the developing spinal cord.

Its subcellular location is the cell membrane. Receptor for Wnt proteins. Functions in the canonical Wnt/beta-catenin signaling pathway. Activation by WNT7A induces expression of beta-catenin target genes. The canonical Wnt/beta-catenin signaling pathway leads to the activation of disheveled proteins, inhibition of GSK-3 kinase, nuclear accumulation of beta-catenin and activation of Wnt target genes. A second signaling pathway involving PKC and calcium fluxes has been seen for some family members, but it is not yet clear if it represents a distinct pathway or if it can be integrated in the canonical pathway, as PKC seems to be required for Wnt-mediated inactivation of GSK-3 kinase. Both pathways seem to involve interactions with G-proteins. May be involved in transduction and intercellular transmission of polarity information during tissue morphogenesis and/or in differentiated tissues. In Gallus gallus (Chicken), this protein is Frizzled-10 (FZD10).